We begin with the raw amino-acid sequence, 259 residues long: Deoxyribose-phosphate aldolase (259 aa).

The active-site Proton donor/acceptor is Asp-104. The Schiff-base intermediate with acetaldehyde role is filled by Lys-168. Lys-200 functions as the Proton donor/acceptor in the catalytic mechanism.

The protein belongs to the DeoC/FbaB aldolase family. DeoC type 2 subfamily.

The protein localises to the cytoplasm. The catalysed reaction is 2-deoxy-D-ribose 5-phosphate = D-glyceraldehyde 3-phosphate + acetaldehyde. It participates in carbohydrate degradation; 2-deoxy-D-ribose 1-phosphate degradation; D-glyceraldehyde 3-phosphate and acetaldehyde from 2-deoxy-alpha-D-ribose 1-phosphate: step 2/2. Its function is as follows. Catalyzes a reversible aldol reaction between acetaldehyde and D-glyceraldehyde 3-phosphate to generate 2-deoxy-D-ribose 5-phosphate. In Agrobacterium fabrum (strain C58 / ATCC 33970) (Agrobacterium tumefaciens (strain C58)), this protein is Deoxyribose-phosphate aldolase.